Consider the following 430-residue polypeptide: tRNA(Ile)-lysidine synthase (430 aa).

21-26 (SGGLDS) contacts ATP.

This sequence belongs to the tRNA(Ile)-lysidine synthase family.

The protein resides in the cytoplasm. It catalyses the reaction cytidine(34) in tRNA(Ile2) + L-lysine + ATP = lysidine(34) in tRNA(Ile2) + AMP + diphosphate + H(+). In terms of biological role, ligates lysine onto the cytidine present at position 34 of the AUA codon-specific tRNA(Ile) that contains the anticodon CAU, in an ATP-dependent manner. Cytidine is converted to lysidine, thus changing the amino acid specificity of the tRNA from methionine to isoleucine. The protein is tRNA(Ile)-lysidine synthase of Salmonella schwarzengrund (strain CVM19633).